We begin with the raw amino-acid sequence, 664 residues long: Probable L-type lectin-domain containing receptor kinase V.3 (664 aa).

The first 26 residues, 1 to 26 (MSMSCKINWLMVLVIIALSNLESSLG), serve as a signal peptide directing secretion. Over 27–278 (RLVFEGSAGL…YPKAESQVKL (252 aa)) the chain is Extracellular. The segment at 28-250 (LVFEGSAGLM…AIHYMWMWYV (223 aa)) is legume-lectin like. N-linked (GlcNAc...) asparagine glycosylation is found at Asn69, Asn116, Asn122, Asn174, and Asn197. Residues 279–299 (IVLVTFLTLALFVALAASALI) traverse the membrane as a helical segment. Topologically, residues 300–664 (VFFYKRHKKL…LPSGRPRLFL (365 aa)) are cytoplasmic. The Protein kinase domain maps to 335–617 (NGFKQLLGEG…GVSELPDNLL (283 aa)). ATP contacts are provided by residues 341 to 349 (LGEGGFGPV) and Lys364. Residue Asp461 is the Proton acceptor of the active site.

This sequence in the C-terminal section; belongs to the protein kinase superfamily. Ser/Thr protein kinase family. In the N-terminal section; belongs to the leguminous lectin family.

The protein resides in the cell membrane. The enzyme catalyses L-seryl-[protein] + ATP = O-phospho-L-seryl-[protein] + ADP + H(+). It carries out the reaction L-threonyl-[protein] + ATP = O-phospho-L-threonyl-[protein] + ADP + H(+). The protein is Probable L-type lectin-domain containing receptor kinase V.3 (LECRK53) of Arabidopsis thaliana (Mouse-ear cress).